A 173-amino-acid polypeptide reads, in one-letter code: Pectinesterase inhibitor 2 (173 aa).

Positions 1 to 25 (MAAYLTNRVLMSSLMFFVMTGSLNA) are cleaved as a signal peptide. The cysteines at positions 34 and 43 are disulfide-linked. Residues Asn-39 and Asn-63 are each glycosylated (N-linked (GlcNAc...) asparagine). A disulfide bridge connects residues Cys-99 and Cys-139.

The protein belongs to the PMEI family. Interacts with PPME1. Highest expression in flowers. Expressed exclusively at the pollen tube tip.

It localises to the secreted. Its subcellular location is the extracellular space. The protein resides in the apoplast. Its function is as follows. Inhibits pectin methylesterase (PME) from flowers, siliques and pollen tube. This chain is Pectinesterase inhibitor 2, found in Arabidopsis thaliana (Mouse-ear cress).